Consider the following 301-residue polypeptide: Heat shock factor protein HSF24 (301 aa).

A DNA-binding region spans residues 7–101; it reads PAPFLLKTYQ…LLTAIRRRKT (95 aa). Disordered regions lie at residues 103-160 and 221-244; these read TSTP…DENE and GVKDLEEQGSYNDNDDKEDDDEKG. Residues 107-142 show a composition bias toward low complexity; the sequence is AGGKSVAAGASASPDNSGDDIGSSSTSSPDSKNPGS. A compositionally biased stretch (acidic residues) spans 233 to 243; the sequence is DNDDKEDDDEK.

It belongs to the HSF family. Homotrimer. Post-translationally, exhibits temperature-dependent phosphorylation.

It is found in the nucleus. Functionally, DNA-binding protein that specifically binds heat shock promoter elements (HSE) and activates transcription. The chain is Heat shock factor protein HSF24 (HSF24) from Solanum peruvianum (Peruvian tomato).